Here is a 518-residue protein sequence, read N- to C-terminus: Protein FAM98A (518 aa).

2 disordered regions span residues 297 to 415 (VLMG…GHSS) and 434 to 518 (GSGY…HYTS). Residues 302–311 (VPDRGGRPNE) are compositionally biased toward basic and acidic residues. 3 stretches are compositionally biased toward gly residues: residues 349–364 (GGRGGHEQGGGRGGRG), 383–396 (WTDGGSGGGGGYQD), and 405–415 (QPGGYHGGHSS). Over residues 447–459 (RYQDGGHHGDRGG) the composition is skewed to basic and acidic residues. Residues 460 to 484 (GRGGRGGRGGRGGRAGQGGGWGGRG) show a composition bias toward gly residues. Residues 488–504 (YHQGGQFEQHFQHGGYQ) are compositionally biased toward low complexity. Over residues 505–518 (YNHSGFGQGRHYTS) the composition is skewed to polar residues.

The protein belongs to the FAM98 family. As to quaternary structure, interacts (via N- and C-terminus) with DDX1. Interacts (via N- and C-terminus) with C14orf166. Interacts with FAM98B. Interacts with PLEKHM1 (via N- and C-terminus). As to expression, expressed strongly in colorectal cancer cells. Expressed strongly in colorectal cancer tissues compared to wild-type colon samples (at protein level). Expressed strongly in colorectal cancer tissues compared to wild-type colon samples.

Positively stimulates PRMT1-induced protein arginine methylation. Involved in skeletal homeostasis. Positively regulates lysosome peripheral distribution and ruffled border formation in osteoclasts. This Homo sapiens (Human) protein is Protein FAM98A.